The sequence spans 62 residues: Kunitz-type serine protease inhibitor (62 aa).

The BPTI/Kunitz inhibitor domain occupies 2–52; the sequence is CYLPDDPGVCKAHIPRFYYNPASNKCKNFIYGGCGGNANNFETRAECRHTC. Cystine bridges form between Cys-2/Cys-52, Cys-11/Cys-35, and Cys-27/Cys-48.

This sequence belongs to the venom Kunitz-type family. In terms of tissue distribution, expressed by the venom gland.

It is found in the secreted. Functionally, serine protease inhibitor that inhibits trypsin. The recombinant protein also barely blocks voltage-gated potassium channel Kv1.3/KCNA3 (3.70% inhibition at 60 nM of toxin). The polypeptide is Kunitz-type serine protease inhibitor (Eristicophis macmahoni (Leaf-nosed viper)).